A 219-amino-acid chain; its full sequence is Phosphate-specific transport system accessory protein PhoU homolog (219 aa).

The protein belongs to the PhoU family. In terms of assembly, homodimer.

Its subcellular location is the cytoplasm. Plays a role in the regulation of phosphate uptake. Encoded together with proteins of the phosphate-specific transport (Pst) system in the polycistronic pstSCAB-phoU operon. This is Phosphate-specific transport system accessory protein PhoU homolog from Clostridium acetobutylicum (strain ATCC 824 / DSM 792 / JCM 1419 / IAM 19013 / LMG 5710 / NBRC 13948 / NRRL B-527 / VKM B-1787 / 2291 / W).